A 105-amino-acid polypeptide reads, in one-letter code: Integration host factor subunit beta (105 aa).

Belongs to the bacterial histone-like protein family. Heterodimer of an alpha and a beta chain.

Functionally, this protein is one of the two subunits of integration host factor, a specific DNA-binding protein that functions in genetic recombination as well as in transcriptional and translational control. In Nitrosomonas europaea (strain ATCC 19718 / CIP 103999 / KCTC 2705 / NBRC 14298), this protein is Integration host factor subunit beta.